Here is a 249-residue protein sequence, read N- to C-terminus: 2,3-bisphosphoglycerate-dependent phosphoglycerate mutase (249 aa).

Substrate contacts are provided by residues 11-18, 24-25, R63, 90-93, K101, 117-118, and 185-186; these read RHGNSEWN, TG, ERHY, RR, and GN. Catalysis depends on H12, which acts as the Tele-phosphohistidine intermediate. E90 functions as the Proton donor/acceptor in the catalytic mechanism.

The protein belongs to the phosphoglycerate mutase family. BPG-dependent PGAM subfamily.

It catalyses the reaction (2R)-2-phosphoglycerate = (2R)-3-phosphoglycerate. It participates in carbohydrate degradation; glycolysis; pyruvate from D-glyceraldehyde 3-phosphate: step 3/5. Functionally, catalyzes the interconversion of 2-phosphoglycerate and 3-phosphoglycerate. In Leifsonia xyli subsp. xyli (strain CTCB07), this protein is 2,3-bisphosphoglycerate-dependent phosphoglycerate mutase.